The sequence spans 347 residues: NADH-ubiquinone oxidoreductase chain 2 (347 aa).

Helical transmembrane passes span 13-33, 55-75, 96-116, 122-142, 151-171, 178-198, 199-219, 237-257, 274-294, and 326-346; these read IFTGTLITALSSHWFFAWLGL, AAIKYFLTQATASMILLMAIL, LMIVTALAMKLGMAPFHFWVP, VPLTSGLLLLTWQKLAPISIM, TNILLTLSILSILVGGWGGLN, ILAYSSITHMGWMMAVLPYNP, DITILNLIIYIILTTTAFLIL, LTWLMPLIPSTLLSLGGLPPL, GNLITPTIMAIITLLNLYFYV, and LPTLTILTTLLLPISPLILSI.

The protein belongs to the complex I subunit 2 family. As to quaternary structure, core subunit of respiratory chain NADH dehydrogenase (Complex I) which is composed of 45 different subunits. Interacts with TMEM242.

It is found in the mitochondrion inner membrane. It carries out the reaction a ubiquinone + NADH + 5 H(+)(in) = a ubiquinol + NAD(+) + 4 H(+)(out). Functionally, core subunit of the mitochondrial membrane respiratory chain NADH dehydrogenase (Complex I) which catalyzes electron transfer from NADH through the respiratory chain, using ubiquinone as an electron acceptor. Essential for the catalytic activity and assembly of complex I. This chain is NADH-ubiquinone oxidoreductase chain 2, found in Pongo abelii (Sumatran orangutan).